The chain runs to 271 residues: Phosphatidylinositol transfer protein beta isoform (271 aa).

N6-acetyllysine is present on Lys215. Ser262 bears the Phosphoserine mark.

Belongs to the PtdIns transfer protein family. PI transfer class I subfamily. Constitutive phosphorylation of Ser-262 has no effect on phospholipid transfer activity but is required for Golgi targeting. In terms of tissue distribution, widely expressed in various tissues including brain.

The protein localises to the golgi apparatus. It is found in the golgi apparatus membrane. Its subcellular location is the endoplasmic reticulum membrane. The enzyme catalyses a 1,2-diacyl-sn-glycero-3-phosphocholine(in) = a 1,2-diacyl-sn-glycero-3-phosphocholine(out). It carries out the reaction a 1,2-diacyl-sn-glycero-3-phospho-(1D-myo-inositol)(in) = a 1,2-diacyl-sn-glycero-3-phospho-(1D-myo-inositol)(out). It catalyses the reaction an N-(acyl)-sphingosylphosphocholine(in) = an N-(acyl)-sphingosylphosphocholine(out). Its activity is regulated as follows. Phosphatidylinositol transfer activity is inhibited by N-ethylmaleimide. Catalyzes the transfer of phosphatidylinositol and phosphatidylcholine between membranes. Also catalyzes the transfer of sphingomyelin. Required for COPI-mediated retrograde transport from the Golgi to the endoplasmic reticulum; phosphatidylinositol and phosphatidylcholine transfer activity is essential for this function. In Homo sapiens (Human), this protein is Phosphatidylinositol transfer protein beta isoform (PITPNB).